Reading from the N-terminus, the 540-residue chain is Cytochrome bc1 complex cytochrome b subunit (540 aa).

Residues Glu-40–Phe-60 form a helical membrane-spanning segment. Heme-binding residues include His-105 and His-119. A run of 3 helical transmembrane segments spans residues Ala-109–Phe-129, Trp-137–Leu-157, and Ile-169–Phe-189. The heme site is built by His-206 and His-221. 5 consecutive transmembrane segments (helical) span residues Val-207 to Tyr-227, Phe-259 to Ile-279, Ala-325 to Ile-345, Leu-371 to Phe-391, and Ile-408 to Leu-428.

This sequence belongs to the cytochrome b family. In terms of assembly, the cytochrome bc1 complex is composed of a cytochrome b (QcrB), the Rieske protein iron-sulfur (QcrA) and a diheme cytochrome c (QcrC) subunit. The cofactor is heme.

Its subcellular location is the cell membrane. It catalyses the reaction a quinol + 2 Fe(III)-[cytochrome c](out) = a quinone + 2 Fe(II)-[cytochrome c](out) + 2 H(+)(out). Functionally, cytochrome b subunit of the cytochrome bc1 complex, an essential component of the respiratory electron transport chain required for ATP synthesis. The bc1 complex catalyzes the oxidation of menaquinol and the reduction of cytochrome c in the respiratory chain. The bc1 complex operates through a Q-cycle mechanism that couples electron transfer to generation of the proton gradient that drives ATP synthesis. This is Cytochrome bc1 complex cytochrome b subunit (qcrB) from Corynebacterium diphtheriae (strain ATCC 700971 / NCTC 13129 / Biotype gravis).